The following is a 102-amino-acid chain: MPRPKIARQICGRPANSCFKPNGRPMHQLEQVALAADEFEALRLVDLEGMQQQEAAVVMGVSRQTLANILKKARYKVVDCLSQGKALMMQASDPDTSGDIPL.

This sequence belongs to the UPF0251 family.

This Aeromonas salmonicida (strain A449) protein is UPF0251 protein ASA_1331.